A 299-amino-acid polypeptide reads, in one-letter code: Very long chain fatty acid elongase 5 (299 aa).

Met1 carries the post-translational modification N-acetylmethionine. A run of 7 helical transmembrane segments spans residues 26 to 46 (WFLL…LLIV), 64 to 84 (ILVV…CELV), 112 to 132 (VLWW…FFIL), 150 to 170 (MLNI…YFGA), 172 to 192 (LNSF…VLSM), 205 to 225 (GQLL…IWPC), and 226 to 246 (TFPL…IALF). The tract at residues 262–299 (RKDHLKDHQNGSKAAVNGHTNSFSPLENNVKPRKLRKD) is disordered. A compositionally biased stretch (polar residues) spans 279 to 288 (GHTNSFSPLE). Ser285 is subject to Phosphoserine.

Belongs to the ELO family. ELOVL5 subfamily. In terms of assembly, interacts with TECR.

Its subcellular location is the endoplasmic reticulum membrane. It localises to the cell projection. The protein resides in the dendrite. The enzyme catalyses a very-long-chain acyl-CoA + malonyl-CoA + H(+) = a very-long-chain 3-oxoacyl-CoA + CO2 + CoA. The catalysed reaction is (6Z,9Z,12Z)-octadecatrienoyl-CoA + malonyl-CoA + H(+) = (8Z,11Z,14Z)-3-oxoeicosatrienoyl-CoA + CO2 + CoA. It carries out the reaction (9Z,12Z,15Z)-octadecatrienoyl-CoA + malonyl-CoA + H(+) = (11Z,14Z,17Z)-3-oxoeicosatrienoyl-CoA + CO2 + CoA. It catalyses the reaction (9Z)-hexadecenoyl-CoA + malonyl-CoA + H(+) = 3-oxo-(11Z)-octadecenoyl-CoA + CO2 + CoA. The enzyme catalyses (9Z)-octadecenoyl-CoA + malonyl-CoA + H(+) = 3-oxo-(11Z)-eicosenoyl-CoA + CO2 + CoA. The catalysed reaction is (11Z)-octadecenoyl-CoA + malonyl-CoA + H(+) = 3-oxo-(13Z)-eicosenoyl-CoA + CO2 + CoA. It carries out the reaction (9Z,12Z)-octadecadienoyl-CoA + malonyl-CoA + H(+) = (11Z,14Z)-3-oxoicosa-11,14-dienoyl-CoA + CO2 + CoA. It catalyses the reaction (6Z,9Z,12Z,15Z)-octadecatetraenoyl-CoA + malonyl-CoA + H(+) = (8Z,11Z,14Z,17Z)-3-oxoicosatetraenoyl-CoA + CO2 + CoA. The enzyme catalyses (5Z,8Z,11Z,14Z)-eicosatetraenoyl-CoA + malonyl-CoA + H(+) = (7Z,10Z,13Z,16Z)-3-oxodocosatetraenoyl-CoA + CO2 + CoA. The catalysed reaction is (5Z,8Z,11Z,14Z,17Z)-eicosapentaenoyl-CoA + malonyl-CoA + H(+) = 3-oxo-(7Z,10Z,13Z,16Z,19Z)-docosapentaenoyl-CoA + CO2 + CoA. Its pathway is lipid metabolism; polyunsaturated fatty acid biosynthesis. Its function is as follows. Catalyzes the first and rate-limiting reaction of the four reactions that constitute the long-chain fatty acids elongation cycle. This endoplasmic reticulum-bound enzymatic process allows the addition of 2 carbons to the chain of long- and very long-chain fatty acids (VLCFAs) per cycle. Condensing enzyme that acts specifically toward polyunsaturated acyl-CoA with the higher activity toward C18:3(n-6) acyl-CoA. May participate in the production of monounsaturated and of polyunsaturated VLCFAs of different chain lengths that are involved in multiple biological processes as precursors of membrane lipids and lipid mediators. In conditions where the essential linoleic and alpha linoleic fatty acids are lacking it is also involved in the synthesis of Mead acid from oleic acid. The chain is Very long chain fatty acid elongase 5 from Pongo abelii (Sumatran orangutan).